The sequence spans 209 residues: Glutathione S-transferase (209 aa).

The 85-residue stretch at 7–91 (FFFFFFFFFS…YLSKKYNISG (85 aa)) folds into the GST N-terminal domain. Residues 62–63 (QV), 75–76 (QS), Asp-109, Lys-121, and Thr-125 contribute to the glutathione site. The region spanning 93-209 (GELNEFYADM…YIANRKESVY (117 aa)) is the GST C-terminal domain.

It belongs to the GST superfamily. In terms of assembly, homodimer. In the absence of ligands two homodimers may interact to form a tetramer.

The catalysed reaction is RX + glutathione = an S-substituted glutathione + a halide anion + H(+). Conjugation of reduced glutathione to a wide number of exogenous and endogenous hydrophobic electrophiles. May also function as a storage protein or ligandin for parasitotoxic ferriprotoporphyrin IX (hemin). In Plasmodium yoelii yoelii, this protein is Glutathione S-transferase.